The following is a 725-amino-acid chain: Calcium-responsive transcription factor (725 aa).

Residues 572 to 592 (TSPDESPAVVSVNNQPSSSPS) form a disordered region. Positions 577 to 592 (SPAVVSVNNQPSSSPS) are enriched in low complexity.

The protein localises to the nucleus. Functionally, acts as a transcriptional activator that mediates the calcium- and neuron-selective induction of BDNF exon III transcription. Binds to the consensus calcium-response element CaRE1 5'-CTATTTCGAG-3' sequence. The polypeptide is Calcium-responsive transcription factor (CARF) (Homo sapiens (Human)).